The chain runs to 364 residues: Transposase for insertion sequence element IS1111A (364 aa).

Belongs to the transposase IS1111A/IS1328/IS1533 family.

In terms of biological role, required for the transposition of the insertion element. The polypeptide is Transposase for insertion sequence element IS1111A (Coxiella burnetii (strain RSA 493 / Nine Mile phase I)).